The primary structure comprises 39 residues: Cytochrome b559 subunit beta (39 aa).

Residues 14-30 traverse the membrane as a helical segment; it reads WLAVHGLAVPTVFFLGS. H18 serves as a coordination point for heme.

It belongs to the PsbE/PsbF family. As to quaternary structure, heterodimer of an alpha subunit and a beta subunit. PSII is composed of 1 copy each of membrane proteins PsbA, PsbB, PsbC, PsbD, PsbE, PsbF, PsbH, PsbI, PsbJ, PsbK, PsbL, PsbM, PsbT, PsbX, PsbY, PsbZ, Psb30/Ycf12, at least 3 peripheral proteins of the oxygen-evolving complex and a large number of cofactors. It forms dimeric complexes. Heme b serves as cofactor.

The protein resides in the plastid. It is found in the chloroplast thylakoid membrane. In terms of biological role, this b-type cytochrome is tightly associated with the reaction center of photosystem II (PSII). PSII is a light-driven water:plastoquinone oxidoreductase that uses light energy to abstract electrons from H(2)O, generating O(2) and a proton gradient subsequently used for ATP formation. It consists of a core antenna complex that captures photons, and an electron transfer chain that converts photonic excitation into a charge separation. This is Cytochrome b559 subunit beta from Adiantum capillus-veneris (Maidenhair fern).